Here is a 139-residue protein sequence, read N- to C-terminus: Phosphoribosyl-AMP cyclohydrolase (139 aa).

D91 contacts Mg(2+). C92 is a Zn(2+) binding site. Mg(2+) contacts are provided by D93 and D95. 2 residues coordinate Zn(2+): C110 and C117.

The protein belongs to the PRA-CH family. In terms of assembly, homodimer. Requires Mg(2+) as cofactor. Zn(2+) is required as a cofactor.

The protein localises to the cytoplasm. The catalysed reaction is 1-(5-phospho-beta-D-ribosyl)-5'-AMP + H2O = 1-(5-phospho-beta-D-ribosyl)-5-[(5-phospho-beta-D-ribosylamino)methylideneamino]imidazole-4-carboxamide. It participates in amino-acid biosynthesis; L-histidine biosynthesis; L-histidine from 5-phospho-alpha-D-ribose 1-diphosphate: step 3/9. In terms of biological role, catalyzes the hydrolysis of the adenine ring of phosphoribosyl-AMP. The polypeptide is Phosphoribosyl-AMP cyclohydrolase (Brucella canis (strain ATCC 23365 / NCTC 10854 / RM-666)).